The chain runs to 466 residues: SVAFKAGVKEYKLTYYTPDYETKDTDILAAFRVTPQPGVPPEEAGAAVAAESSTGTWTTVWTDGLTSLDRYKGRCYHIEPVAGEESQFIAYVAYPLDLFEEGSVTNMFTSIVGNVFGFKALRALRLEDLRIPPAYSKTFQGPPHGIQVERDKLNKYGRPLLGCTIKPKLGLSAKNYGRAVYECLRGGLDFTKDDENVNSQPFMRWRDRFLFCAEAIYKAQAETGEIKGHYLNATAGTCEEMMKRAIFARELGVPIVMHDYLTGGFTANTSLAHYCRDNGLLLHIHRAMHAVIDRQKNHGMHFRVLAKALRMSGGDHIHAGTVVGKLEGEREITLGFVDLLRDDYIEKDRSRGIYFTQDWVSLPGVLPVASGGIHVWHMPALTEIFGDDSVLQFGGGTLGHPWGNAPGAVANRVALEACVQARNEGRDLAREGNEIIREAAKWSPELAAACEVWKEIKFEFPAMDTL.

At lysine 5 the chain carries N6,N6,N6-trimethyllysine. Positions 114 and 164 each coordinate substrate. The active-site Proton acceptor is lysine 166. Lysine 168 contacts substrate. Mg(2+) is bound by residues lysine 192, aspartate 194, and glutamate 195. The residue at position 192 (lysine 192) is an N6-carboxylysine. Histidine 285 acts as the Proton acceptor in catalysis. Substrate is bound by residues arginine 286, histidine 318, and serine 370.

This sequence belongs to the RuBisCO large chain family. Type I subfamily. Heterohexadecamer of 8 large chains and 8 small chains; disulfide-linked. The disulfide link is formed within the large subunit homodimers. Mg(2+) is required as a cofactor. The disulfide bond which can form in the large chain dimeric partners within the hexadecamer appears to be associated with oxidative stress and protein turnover.

It localises to the plastid. The protein resides in the chloroplast. The enzyme catalyses 2 (2R)-3-phosphoglycerate + 2 H(+) = D-ribulose 1,5-bisphosphate + CO2 + H2O. It carries out the reaction D-ribulose 1,5-bisphosphate + O2 = 2-phosphoglycolate + (2R)-3-phosphoglycerate + 2 H(+). In terms of biological role, ruBisCO catalyzes two reactions: the carboxylation of D-ribulose 1,5-bisphosphate, the primary event in carbon dioxide fixation, as well as the oxidative fragmentation of the pentose substrate in the photorespiration process. Both reactions occur simultaneously and in competition at the same active site. The chain is Ribulose bisphosphate carboxylase large chain from Betula nigra (River birch).